The primary structure comprises 142 residues: Large ribosomal subunit protein uL13 (142 aa).

The protein belongs to the universal ribosomal protein uL13 family. Part of the 50S ribosomal subunit.

Functionally, this protein is one of the early assembly proteins of the 50S ribosomal subunit, although it is not seen to bind rRNA by itself. It is important during the early stages of 50S assembly. The polypeptide is Large ribosomal subunit protein uL13 (Teredinibacter turnerae (strain ATCC 39867 / T7901)).